A 228-amino-acid chain; its full sequence is Phosphoribosylformylglycinamidine synthase subunit PurQ (228 aa).

The region spanning lysine 2–arginine 225 is the Glutamine amidotransferase type-1 domain. The Nucleophile role is filled by cysteine 86. Residues histidine 194 and glutamate 196 contribute to the active site.

In terms of assembly, part of the FGAM synthase complex composed of 1 PurL, 1 PurQ and 2 PurS subunits.

It is found in the cytoplasm. It catalyses the reaction N(2)-formyl-N(1)-(5-phospho-beta-D-ribosyl)glycinamide + L-glutamine + ATP + H2O = 2-formamido-N(1)-(5-O-phospho-beta-D-ribosyl)acetamidine + L-glutamate + ADP + phosphate + H(+). It carries out the reaction L-glutamine + H2O = L-glutamate + NH4(+). It participates in purine metabolism; IMP biosynthesis via de novo pathway; 5-amino-1-(5-phospho-D-ribosyl)imidazole from N(2)-formyl-N(1)-(5-phospho-D-ribosyl)glycinamide: step 1/2. Its function is as follows. Part of the phosphoribosylformylglycinamidine synthase complex involved in the purines biosynthetic pathway. Catalyzes the ATP-dependent conversion of formylglycinamide ribonucleotide (FGAR) and glutamine to yield formylglycinamidine ribonucleotide (FGAM) and glutamate. The FGAM synthase complex is composed of three subunits. PurQ produces an ammonia molecule by converting glutamine to glutamate. PurL transfers the ammonia molecule to FGAR to form FGAM in an ATP-dependent manner. PurS interacts with PurQ and PurL and is thought to assist in the transfer of the ammonia molecule from PurQ to PurL. The polypeptide is Phosphoribosylformylglycinamidine synthase subunit PurQ (Lacticaseibacillus paracasei (strain ATCC 334 / BCRC 17002 / CCUG 31169 / CIP 107868 / KCTC 3260 / NRRL B-441) (Lactobacillus paracasei)).